Reading from the N-terminus, the 633-residue chain is tRNA uridine 5-carboxymethylaminomethyl modification enzyme MnmG (633 aa).

13–18 contacts FAD; it reads GGGHAG. 273–287 provides a ligand contact to NAD(+); the sequence is GPRYCPSIEDKINRF.

It belongs to the MnmG family. Homodimer. Heterotetramer of two MnmE and two MnmG subunits. It depends on FAD as a cofactor.

Its subcellular location is the cytoplasm. Functionally, NAD-binding protein involved in the addition of a carboxymethylaminomethyl (cmnm) group at the wobble position (U34) of certain tRNAs, forming tRNA-cmnm(5)s(2)U34. This Pseudoalteromonas atlantica (strain T6c / ATCC BAA-1087) protein is tRNA uridine 5-carboxymethylaminomethyl modification enzyme MnmG.